The primary structure comprises 1051 residues: Carbamoyl phosphate synthase large chain (1051 aa).

The segment at 1–399 (MKETPKKVLV…SLQKAVRMLD (399 aa)) is carboxyphosphate synthetic domain. Arg-127, Arg-167, Gly-173, Gly-174, Lys-206, Leu-208, Glu-213, Gly-239, Val-240, His-241, Gln-282, and Glu-296 together coordinate ATP. Residues 131–325 (RETMIENNLP…LAYVSAKLAL (195 aa)) form the ATP-grasp 1 domain. Gln-282, Glu-296, and Asn-298 together coordinate Mg(2+). The Mn(2+) site is built by Gln-282, Glu-296, and Asn-298. An oligomerization domain region spans residues 400–548 (IGEPGVVGGK…LTYNGTEDDL (149 aa)). The carbamoyl phosphate synthetic domain stretch occupies residues 549 to 930 (EFSQGNKLLI…LKSWLSSIPN (382 aa)). The region spanning 673–863 (SKLLDKLGIS…LINESMKAIF (191 aa)) is the ATP-grasp 2 domain. 10 residues coordinate ATP: Arg-709, Lys-748, Ile-750, Glu-755, Gly-779, Val-780, His-781, Ser-782, Gln-822, and Glu-834. Positions 822, 834, and 836 each coordinate Mg(2+). Mn(2+) is bound by residues Gln-822, Glu-834, and Asn-836. Residues 930 to 1051 (NRIPNKNGIA…FEISEYGGGI (122 aa)) form the MGS-like domain. Positions 931–1051 (RIPNKNGIAL…FEISEYGGGI (121 aa)) are allosteric domain.

This sequence belongs to the CarB family. As to quaternary structure, composed of two chains; the small (or glutamine) chain promotes the hydrolysis of glutamine to ammonia, which is used by the large (or ammonia) chain to synthesize carbamoyl phosphate. Tetramer of heterodimers (alpha,beta)4. Requires Mg(2+) as cofactor. The cofactor is Mn(2+).

The catalysed reaction is hydrogencarbonate + L-glutamine + 2 ATP + H2O = carbamoyl phosphate + L-glutamate + 2 ADP + phosphate + 2 H(+). It catalyses the reaction hydrogencarbonate + NH4(+) + 2 ATP = carbamoyl phosphate + 2 ADP + phosphate + 2 H(+). Its pathway is amino-acid biosynthesis; L-arginine biosynthesis; carbamoyl phosphate from bicarbonate: step 1/1. It functions in the pathway pyrimidine metabolism; UMP biosynthesis via de novo pathway; (S)-dihydroorotate from bicarbonate: step 1/3. In terms of biological role, large subunit of the glutamine-dependent carbamoyl phosphate synthetase (CPSase). CPSase catalyzes the formation of carbamoyl phosphate from the ammonia moiety of glutamine, carbonate, and phosphate donated by ATP, constituting the first step of 2 biosynthetic pathways, one leading to arginine and/or urea and the other to pyrimidine nucleotides. The large subunit (synthetase) binds the substrates ammonia (free or transferred from glutamine from the small subunit), hydrogencarbonate and ATP and carries out an ATP-coupled ligase reaction, activating hydrogencarbonate by forming carboxy phosphate which reacts with ammonia to form carbamoyl phosphate. The sequence is that of Carbamoyl phosphate synthase large chain from Saccharolobus islandicus (strain M.16.27) (Sulfolobus islandicus).